The sequence spans 313 residues: Ankyrin repeat family A protein 2 (313 aa).

5 ANK repeats span residues 148 to 180 (ANSL…HTDE), 181 to 213 (EGFT…LLGK), 214 to 246 (GRES…EYDW), 247 to 279 (NGGT…IETD), and 280 to 313 (SGYN…NIKE).

In terms of assembly, interacts (via ANK repeats) with CCDC8 (via PxLPxI/L motif); mediates the interaction with the 3M complex which is composed of CCDC8, CUL7 and OBSL1. Interacts (via ANK repeats) with HDAC4 (via PxLPxI/L motif). Interacts (via ANK repeats) with HDAC5 (via PxLPxI/L motif). Interacts (via ANK repeats) with LRP2/megalin (via PxLPxI/L motif). Interacts (via ANK repeats) with RFX7 (via PxLPxI/L motif). Interacts with AHRR. Interacts with NEK6.

Its subcellular location is the cytoplasm. The protein localises to the cytoskeleton. It is found in the membrane. Functionally, may regulate the interaction between the 3M complex and the histone deacetylases HDAC4 and HDAC5. May also regulate LRP2/megalin. In Homo sapiens (Human), this protein is Ankyrin repeat family A protein 2 (ANKRA2).